A 451-amino-acid chain; its full sequence is Arginine biosynthesis bifunctional protein ArgJ, mitochondrial (451 aa).

Residues T180, K209, T220, E307, N446, and T451 each contribute to the substrate site. T220 acts as the Nucleophile in catalysis.

This sequence belongs to the ArgJ family. Heterodimer of an alpha and a beta chain. The alpha and beta chains are autoproteolytically processed from a single precursor protein within the mitochondrion.

Its subcellular location is the mitochondrion matrix. The catalysed reaction is N(2)-acetyl-L-ornithine + L-glutamate = N-acetyl-L-glutamate + L-ornithine. It catalyses the reaction L-glutamate + acetyl-CoA = N-acetyl-L-glutamate + CoA + H(+). The protein operates within amino-acid biosynthesis; L-arginine biosynthesis; L-ornithine and N-acetyl-L-glutamate from L-glutamate and N(2)-acetyl-L-ornithine (cyclic): step 1/1. It participates in amino-acid biosynthesis; L-arginine biosynthesis; N(2)-acetyl-L-ornithine from L-glutamate: step 1/4. Catalyzes two activities which are involved in the cyclic version of arginine biosynthesis: the synthesis of acetylglutamate from glutamate and acetyl-CoA, and of ornithine by transacetylation between acetylornithine and glutamate. This chain is Arginine biosynthesis bifunctional protein ArgJ, mitochondrial, found in Fusarium vanettenii (strain ATCC MYA-4622 / CBS 123669 / FGSC 9596 / NRRL 45880 / 77-13-4) (Fusarium solani subsp. pisi).